The following is a 246-amino-acid chain: Histone H1 (246 aa).

Disordered stretches follow at residues 1–51 (MATD…PTHL) and 105–246 (GGKL…KAKK). Low complexity predominate over residues 9-34 (PAPLVDAAPEAPADAPAAPAADANAA). A compositionally biased stretch (basic residues) spans 35-47 (KAKKATAPKKRAS). One can recognise an H15 domain in the interval 49 to 119 (THLPYAEMVS…KVKNSYKLSS (71 aa)). Composition is skewed to basic residues over residues 129–189 (AAPK…KAKP) and 198–208 (PLAKKAGRAKA). The segment covering 224–235 (KKAAPSKKAATP) has biased composition (low complexity).

This sequence belongs to the histone H1/H5 family.

Its subcellular location is the nucleus. The protein localises to the chromosome. Histones H1 are necessary for the condensation of nucleosome chains into higher-order structures. The chain is Histone H1 from Zea mays (Maize).